Reading from the N-terminus, the 240-residue chain is Uridylate kinase (240 aa).

13–16 lines the ATP pocket; it reads KFSG. Residue glycine 55 coordinates UMP. Residues glycine 56 and arginine 60 each coordinate ATP. UMP contacts are provided by residues aspartate 76 and 137–144; that span reads TGNPFFTT. ATP contacts are provided by threonine 164, tyrosine 170, and aspartate 173.

This sequence belongs to the UMP kinase family. As to quaternary structure, homohexamer.

It localises to the cytoplasm. The enzyme catalyses UMP + ATP = UDP + ADP. The protein operates within pyrimidine metabolism; CTP biosynthesis via de novo pathway; UDP from UMP (UMPK route): step 1/1. With respect to regulation, inhibited by UTP. Its function is as follows. Catalyzes the reversible phosphorylation of UMP to UDP. The protein is Uridylate kinase of Helicobacter pylori (strain ATCC 700392 / 26695) (Campylobacter pylori).